The following is a 353-amino-acid chain: Phosphoribosylformylglycinamidine cyclo-ligase (353 aa).

The protein belongs to the AIR synthase family.

The protein resides in the cytoplasm. The enzyme catalyses 2-formamido-N(1)-(5-O-phospho-beta-D-ribosyl)acetamidine + ATP = 5-amino-1-(5-phospho-beta-D-ribosyl)imidazole + ADP + phosphate + H(+). Its pathway is purine metabolism; IMP biosynthesis via de novo pathway; 5-amino-1-(5-phospho-D-ribosyl)imidazole from N(2)-formyl-N(1)-(5-phospho-D-ribosyl)glycinamide: step 2/2. The sequence is that of Phosphoribosylformylglycinamidine cyclo-ligase from Magnetococcus marinus (strain ATCC BAA-1437 / JCM 17883 / MC-1).